Consider the following 1178-residue polypeptide: DNA-directed RNA polymerase subunit beta' (1178 aa).

Zn(2+) is bound by residues C60, C62, C75, and C78. Mg(2+)-binding residues include D450, D452, and D454. Zn(2+) contacts are provided by C795, C869, C876, and C879.

It belongs to the RNA polymerase beta' chain family. As to quaternary structure, the RNAP catalytic core consists of 2 alpha, 1 beta, 1 beta' and 1 omega subunit. When a sigma factor is associated with the core the holoenzyme is formed, which can initiate transcription. The cofactor is Mg(2+). Requires Zn(2+) as cofactor.

The catalysed reaction is RNA(n) + a ribonucleoside 5'-triphosphate = RNA(n+1) + diphosphate. DNA-dependent RNA polymerase catalyzes the transcription of DNA into RNA using the four ribonucleoside triphosphates as substrates. This is DNA-directed RNA polymerase subunit beta' from Clostridium perfringens (strain ATCC 13124 / DSM 756 / JCM 1290 / NCIMB 6125 / NCTC 8237 / Type A).